Reading from the N-terminus, the 361-residue chain is Phospho-N-acetylmuramoyl-pentapeptide-transferase (361 aa).

The next 10 helical transmembrane spans lie at 28-48, 74-94, 99-119, 135-155, 167-187, 203-223, 236-256, 263-283, 288-308, and 338-358; these read LAVL…IKFL, TMGG…LADL, IWIT…DDYA, LLLQ…TIDS, SLSM…IVGA, VPIA…GNLI, TGEL…FLWF, VFMG…ISVI, IVLG…IMQV, and KVVI…LSSL.

This sequence belongs to the glycosyltransferase 4 family. MraY subfamily. Requires Mg(2+) as cofactor.

It is found in the cell inner membrane. It carries out the reaction UDP-N-acetyl-alpha-D-muramoyl-L-alanyl-gamma-D-glutamyl-meso-2,6-diaminopimeloyl-D-alanyl-D-alanine + di-trans,octa-cis-undecaprenyl phosphate = di-trans,octa-cis-undecaprenyl diphospho-N-acetyl-alpha-D-muramoyl-L-alanyl-D-glutamyl-meso-2,6-diaminopimeloyl-D-alanyl-D-alanine + UMP. It functions in the pathway cell wall biogenesis; peptidoglycan biosynthesis. Its function is as follows. Catalyzes the initial step of the lipid cycle reactions in the biosynthesis of the cell wall peptidoglycan: transfers peptidoglycan precursor phospho-MurNAc-pentapeptide from UDP-MurNAc-pentapeptide onto the lipid carrier undecaprenyl phosphate, yielding undecaprenyl-pyrophosphoryl-MurNAc-pentapeptide, known as lipid I. The chain is Phospho-N-acetylmuramoyl-pentapeptide-transferase from Rickettsia bellii (strain RML369-C).